The sequence spans 364 residues: Mannose-1-phosphate guanyltransferase (364 aa).

The protein belongs to the transferase hexapeptide repeat family.

The protein localises to the cytoplasm. The enzyme catalyses alpha-D-mannose 1-phosphate + GTP + H(+) = GDP-alpha-D-mannose + diphosphate. It functions in the pathway nucleotide-sugar biosynthesis; GDP-alpha-D-mannose biosynthesis; GDP-alpha-D-mannose from alpha-D-mannose 1-phosphate (GTP route): step 1/1. Its function is as follows. Involved in cell wall synthesis where it is required for glycosylation. Involved in cell cycle progression through cell-size checkpoint. The polypeptide is Mannose-1-phosphate guanyltransferase (MPG1) (Cryptococcus neoformans var. neoformans serotype D (strain B-3501A) (Filobasidiella neoformans)).